We begin with the raw amino-acid sequence, 144 residues long: Putative pre-16S rRNA nuclease (144 aa).

Belongs to the YqgF nuclease family.

Its subcellular location is the cytoplasm. Its function is as follows. Could be a nuclease involved in processing of the 5'-end of pre-16S rRNA. The sequence is that of Putative pre-16S rRNA nuclease from Blochmanniella pennsylvanica (strain BPEN).